A 263-amino-acid polypeptide reads, in one-letter code: Formamidopyrimidine-DNA glycosylase (263 aa).

Residue proline 2 is the Schiff-base intermediate with DNA of the active site. Glutamate 3 functions as the Proton donor in the catalytic mechanism. The active-site Proton donor; for beta-elimination activity is the lysine 59. DNA is bound by residues histidine 93 and arginine 111. An FPG-type zinc finger spans residues 229–263 (KVYGKNGSLCVRCNNVLIRERHAGRSTHYCPHCQK). Arginine 253 functions as the Proton donor; for delta-elimination activity in the catalytic mechanism.

It belongs to the FPG family. Monomer. It depends on Zn(2+) as a cofactor.

It carries out the reaction Hydrolysis of DNA containing ring-opened 7-methylguanine residues, releasing 2,6-diamino-4-hydroxy-5-(N-methyl)formamidopyrimidine.. The catalysed reaction is 2'-deoxyribonucleotide-(2'-deoxyribose 5'-phosphate)-2'-deoxyribonucleotide-DNA = a 3'-end 2'-deoxyribonucleotide-(2,3-dehydro-2,3-deoxyribose 5'-phosphate)-DNA + a 5'-end 5'-phospho-2'-deoxyribonucleoside-DNA + H(+). Involved in base excision repair of DNA damaged by oxidation or by mutagenic agents. Acts as a DNA glycosylase that recognizes and removes damaged bases. Has a preference for oxidized purines, such as 7,8-dihydro-8-oxoguanine (8-oxoG). Has AP (apurinic/apyrimidinic) lyase activity and introduces nicks in the DNA strand. Cleaves the DNA backbone by beta-delta elimination to generate a single-strand break at the site of the removed base with both 3'- and 5'-phosphates. In Carboxydothermus hydrogenoformans (strain ATCC BAA-161 / DSM 6008 / Z-2901), this protein is Formamidopyrimidine-DNA glycosylase.